Consider the following 275-residue polypeptide: Calcium uniporter protein, mitochondrial (275 aa).

A mitochondrion-targeting transit peptide spans 1-28; that stretch reads MNSFVIRNGFGLVRTFNTRLFTTSTQNL. Residues 29–165 are Mitochondrial matrix-facing; it reads EGELKTILGQ…DRKAHRRATA (137 aa). The stretch at 125 to 157 forms a coiled coil; that stretch reads VGLNKLIESKKSEINSLRQKIQPLEEKKQVIDR. Residues 166–186 traverse the membrane as a helical segment; sequence IIWTGLGYCFAQAAILARLTW. Residues 187-192 are Mitochondrial intermembrane-facing; sequence WDLSWD. A Selectivity filter motif is present at residues 191–199; sequence WDIIEPVSY. A helical transmembrane segment spans residues 193-213; that stretch reads IIEPVSYFLTFGSVLIGYTYF. Glutamate 195 is a binding site for Ca(2+). Residues 214-275 lie on the Mitochondrial matrix side of the membrane; it reads TMTKTEFTYE…ELATKYDHTH (62 aa). Residues 244–270 are a coiled coil; it reads PKEDYENLVQAIDKKEKELKELELATK.

It belongs to the MCU (TC 1.A.77) family. Homooligomer.

It localises to the mitochondrion inner membrane. It carries out the reaction Ca(2+)(in) = Ca(2+)(out). Inhibited by ruthenium red or its derivative Ru360. Its function is as follows. Mitochondrial inner membrane calcium uniporter that mediates calcium uptake into mitochondria. Constitutes a pore-forming and calcium-conducting subunit. Mitochondrial calcium homeostasis plays key roles in cellular physiology and regulates cell bioenergetics, cytoplasmic calcium signals and activation of cell death pathways. Sufficient to operate as a pore-forming channel without the need of calcium-sensor or auxiliary subunit. The protein is Calcium uniporter protein, mitochondrial of Dictyostelium discoideum (Social amoeba).